A 529-amino-acid chain; its full sequence is Delayed-rectifier potassium channel regulatory subunit KCNS1 (529 aa).

The Cytoplasmic segment spans residues 1–217 (MLMLLVRGTR…LTMENPGYSL (217 aa)). A helical transmembrane segment spans residues 218 to 239 (PSKLFSCVSISVVLASIAAMCI). Residues 240–270 (HSLPEYQAREAAAAVAAVAAGRSPEGVRDDP) lie on the Extracellular side of the membrane. The helical transmembrane segment at 271–293 (VLRRLEYFCIAWFSFEVSSRLLL) threads the bilayer. Residues 294 to 304 (APSTRNFFCHP) are Cytoplasmic-facing. A helical transmembrane segment spans residues 305 to 322 (LNLIDIVSVLPFYLTLLA). The Extracellular portion of the chain corresponds to 323–340 (GVALGDQGGTGGKELGHL). The helical; Voltage-sensor transmembrane segment at 341-361 (GKVVQVFRLMRIFRVLKLARH) threads the bilayer. Over 362-376 (STGLRSLGATLKHSY) the chain is Cytoplasmic. Residues 377–398 (REVGILLLYLAVGVSVFSGVAY) form a helical membrane-spanning segment. The Extracellular segment spans residues 399-411 (TAEKEEDVGFNTI). Residues 412 to 423 (PACWWWGTVSMT) constitute an intramembrane region (helical). The Selectivity filter signature appears at 424–429 (TVGYGD). Residues 424-431 (TVGYGDVV) lie within the membrane without spanning it. Residues 432–438 (PVTVAGK) are Extracellular-facing. The chain crosses the membrane as a helical span at residues 439-467 (LAASGCILGGILVVALPITIIFNKFSHFY). The Cytoplasmic segment spans residues 468–529 (RRQKALEAAV…PSEPPHPQMY (62 aa)). The segment at 500-529 (LETSREISQEGRSADLETQAPSEPPHPQMY) is disordered. Residues 502 to 514 (TSREISQEGRSAD) show a composition bias toward basic and acidic residues.

The protein belongs to the potassium channel family. S (TC 1.A.1.2) subfamily. Kv9.1/KCNS1 sub-subfamily. In terms of assembly, heterotetramer with KCNB1. Heterotetramer with KCNB2. Does not form homomultimers.

Its subcellular location is the cell membrane. Potassium channel regulatory subunit that modulate the delayed rectifier voltage-gated potassium channel activity of KCNB1 and KCNB2 by altering their kinetics, expression levels, and shifting the half-inactivation potential to more polarized values. While it does not form functional channels on its own, it can form functional heterotetrameric channels with KCNB1 and KCNB2. Each regulatory subunit has unique regulatory properties that can lead to extensive inhibition, significant changes in kinetics, and/or substantial shifts in the voltage dependencies of the inactivation process. The chain is Delayed-rectifier potassium channel regulatory subunit KCNS1 from Colobus guereza (Mantled guereza).